The following is a 280-amino-acid chain: Protease HtpX (280 aa).

The next 2 membrane-spanning stretches (helical) occupy residues 7–26 (TFIL…GLLG) and 30–49 (GMLI…YWYS). H129 contacts Zn(2+). Residue E130 is part of the active site. Zn(2+) is bound at residue H133. 2 helical membrane passes run 146–166 (ATIA…SMFG) and 178–198 (VVGM…QMAI). A Zn(2+)-binding site is contributed by E203.

The protein belongs to the peptidase M48B family. Requires Zn(2+) as cofactor.

Its subcellular location is the cell inner membrane. This is Protease HtpX from Legionella pneumophila subsp. pneumophila (strain Philadelphia 1 / ATCC 33152 / DSM 7513).